The primary structure comprises 174 residues: Protein CURVATURE THYLAKOID 1B, chloroplastic (174 aa).

Positions 1–20 are disordered; it reads MASLSVSSSSTIIDSRAPPS. The N-terminal 63 residues, 1-63, are a transit peptide targeting the chloroplast; it reads MASLSVSSSS…RKIVRNVVTR (63 aa). An N-acetylalanine modification is found at A64. The Stromal segment spans residues 64 to 100; the sequence is ATTEVGEAPATTTEAETTELPEIVKTAQEAWEKVDDK. A helical transmembrane segment spans residues 101–121; it reads YAIGSLAFAGVVALWGSAGMI. Residues 122 to 126 are Lumenal-facing; the sequence is SAIDR. Residues 127-147 traverse the membrane as a helical segment; that stretch reads LPLVPGVLELVGIGYTGWFTY. Over 148 to 174 the chain is Stromal; the sequence is KNLVFKPDREALFEKVKSTYKDILGSS.

It belongs to the CURT family. In terms of assembly, homo- and heterodimers and trimers. Interacts with PSAL. Post-translationally, phosphorylated on either Thr-65 or Thr-66 by a threonine specific thylakoid kinase.

The protein resides in the plastid. It localises to the chloroplast thylakoid membrane. Determines thylakoid architecture by inducing membrane curvature. The polypeptide is Protein CURVATURE THYLAKOID 1B, chloroplastic (CURT1B) (Arabidopsis thaliana (Mouse-ear cress)).